Here is a 126-residue protein sequence, read N- to C-terminus: Ribosome-binding factor A (126 aa).

It belongs to the RbfA family. As to quaternary structure, monomer. Binds 30S ribosomal subunits, but not 50S ribosomal subunits or 70S ribosomes.

It is found in the cytoplasm. Functionally, one of several proteins that assist in the late maturation steps of the functional core of the 30S ribosomal subunit. Associates with free 30S ribosomal subunits (but not with 30S subunits that are part of 70S ribosomes or polysomes). Required for efficient processing of 16S rRNA. May interact with the 5'-terminal helix region of 16S rRNA. This is Ribosome-binding factor A from Haemophilus ducreyi (strain 35000HP / ATCC 700724).